We begin with the raw amino-acid sequence, 494 residues long: Lysine--tRNA ligase (494 aa).

Mg(2+) is bound by residues E407 and E414.

Belongs to the class-II aminoacyl-tRNA synthetase family. In terms of assembly, homodimer. The cofactor is Mg(2+).

The protein localises to the cytoplasm. It carries out the reaction tRNA(Lys) + L-lysine + ATP = L-lysyl-tRNA(Lys) + AMP + diphosphate. This Lactococcus lactis subsp. cremoris (strain SK11) protein is Lysine--tRNA ligase.